We begin with the raw amino-acid sequence, 132 residues long: tRNA (cytidine(56)-2'-O)-methyltransferase (132 aa).

S-adenosyl-L-methionine is bound by residues Leu35, 65–69, and 83–90; these read GSEKV and IGNQPHSE.

Belongs to the aTrm56 family. Homodimer.

The protein resides in the cytoplasm. It carries out the reaction cytidine(56) in tRNA + S-adenosyl-L-methionine = 2'-O-methylcytidine(56) in tRNA + S-adenosyl-L-homocysteine + H(+). Specifically catalyzes the AdoMet-dependent 2'-O-ribose methylation of cytidine at position 56 in tRNAs. The chain is tRNA (cytidine(56)-2'-O)-methyltransferase from Sulfolobus acidocaldarius (strain ATCC 33909 / DSM 639 / JCM 8929 / NBRC 15157 / NCIMB 11770).